An 83-amino-acid chain; its full sequence is Exodeoxyribonuclease 7 small subunit (83 aa).

This sequence belongs to the XseB family. In terms of assembly, heterooligomer composed of large and small subunits.

Its subcellular location is the cytoplasm. It catalyses the reaction Exonucleolytic cleavage in either 5'- to 3'- or 3'- to 5'-direction to yield nucleoside 5'-phosphates.. Bidirectionally degrades single-stranded DNA into large acid-insoluble oligonucleotides, which are then degraded further into small acid-soluble oligonucleotides. The chain is Exodeoxyribonuclease 7 small subunit from Nitrobacter winogradskyi (strain ATCC 25391 / DSM 10237 / CIP 104748 / NCIMB 11846 / Nb-255).